The sequence spans 139 residues: MRSFEFFEHTADVGIRAYGKSLEEAFSNAALGVFEVITDTSKVKPIEYREIYLNGYDLENLLYKWIEELLYYYDSELMVFSKFDLMIDQDSMTLEGKAWGEKFNGKIHERRTVVKAMTYHQLSIEKTENCYVITFVVDI.

The Ca(2+) site is built by aspartate 12, aspartate 138, and isoleucine 139.

The protein belongs to the archease family.

In terms of biological role, activates the tRNA-splicing ligase complex by facilitating the enzymatic turnover of catalytic subunit RtcB. Acts by promoting the guanylylation of RtcB, a key intermediate step in tRNA ligation. Can also alter the NTP specificity of RtcB such that ATP, dGTP or ITP is used efficiently. This chain is Protein archease, found in Saccharolobus islandicus (strain L.S.2.15 / Lassen #1) (Sulfolobus islandicus).